Here is a 361-residue protein sequence, read N- to C-terminus: RNA 3'-terminal phosphate cyclase (361 aa).

ATP is bound by residues Gln105, Pro132, Tyr295, Asp298, Gln299, and His321. The Tele-AMP-histidine intermediate role is filled by His321.

This sequence belongs to the RNA 3'-terminal cyclase family. Type 1 subfamily.

It localises to the nucleus. The protein localises to the nucleoplasm. The enzyme catalyses a 3'-end 3'-phospho-ribonucleotide-RNA + ATP = a 3'-end 2',3'-cyclophospho-ribonucleotide-RNA + AMP + diphosphate. Functionally, catalyzes the conversion of 3'-phosphate to a 2',3'-cyclic phosphodiester at the end of RNA. The mechanism of action of the enzyme occurs in 3 steps: (A) adenylation of the enzyme by ATP; (B) transfer of adenylate to an RNA-N3'P to produce RNA-N3'PP5'A; (C) and attack of the adjacent 2'-hydroxyl on the 3'-phosphorus in the diester linkage to produce the cyclic end product. Likely functions in some aspects of cellular RNA processing. Function plays an important role in a RNA repair and splicing pathway which controls axon regeneration in response to peripheral (PNS) and central nervous system (CNS) injury. In response to axotomy, negatively regulates splicing of Xbp1 which in turn activates downstream effectors which inhibit axon regeneration, including down-regulating the microtubule regulators ringer and futsch. This chain is RNA 3'-terminal phosphate cyclase, found in Drosophila melanogaster (Fruit fly).